Here is a 448-residue protein sequence, read N- to C-terminus: Homogentisate 1,2-dioxygenase (448 aa).

His303 acts as the Proton acceptor in catalysis. Positions 346 and 352 each coordinate Fe cation. Residues Tyr361 and His382 each coordinate homogentisate. His382 is a Fe cation binding site.

Belongs to the homogentisate dioxygenase family. As to quaternary structure, hexamer; dimer of trimers. The cofactor is Fe cation.

It catalyses the reaction homogentisate + O2 = 4-maleylacetoacetate + H(+). Its pathway is amino-acid degradation; L-phenylalanine degradation; acetoacetate and fumarate from L-phenylalanine: step 4/6. Involved in the catabolism of homogentisate (2,5-dihydroxyphenylacetate or 2,5-OH-PhAc), a central intermediate in the degradation of phenylalanine and tyrosine. Catalyzes the oxidative ring cleavage of the aromatic ring of homogentisate to yield maleylacetoacetate. This is Homogentisate 1,2-dioxygenase from Rhodopseudomonas palustris (strain HaA2).